The sequence spans 250 residues: DNA repair protein RecO (250 aa).

It belongs to the RecO family.

Functionally, involved in DNA repair and RecF pathway recombination. This Syntrophobacter fumaroxidans (strain DSM 10017 / MPOB) protein is DNA repair protein RecO.